We begin with the raw amino-acid sequence, 423 residues long: Protein CLP1 homolog (423 aa).

Residues Glu16, Lys57, and 119 to 124 (DVGKST) each bind ATP.

Belongs to the Clp1 family. Clp1 subfamily.

It localises to the nucleus. Functionally, required for endonucleolytic cleavage during polyadenylation-dependent pre-mRNA 3'-end formation. The chain is Protein CLP1 homolog (cbc) from Drosophila simulans (Fruit fly).